We begin with the raw amino-acid sequence, 220 residues long: Coat protein TP4 (220 aa).

Its subcellular location is the virion. The polypeptide is Coat protein TP4 (Thermoproteus tenax (TTV1)).